The sequence spans 130 residues: S-adenosylmethionine decarboxylase proenzyme (130 aa).

Catalysis depends on serine 63, which acts as the Schiff-base intermediate with substrate; via pyruvic acid. Serine 63 is subject to Pyruvic acid (Ser); by autocatalysis. The Proton acceptor; for processing activity role is filled by histidine 68. The active-site Proton donor; for catalytic activity is the cysteine 83.

This sequence belongs to the prokaryotic AdoMetDC family. Type 1 subfamily. As to quaternary structure, heterotetramer of two alpha and two beta chains arranged as a dimer of alpha/beta heterodimers. Requires pyruvate as cofactor. Is synthesized initially as an inactive proenzyme. Formation of the active enzyme involves a self-maturation process in which the active site pyruvoyl group is generated from an internal serine residue via an autocatalytic post-translational modification. Two non-identical subunits are generated from the proenzyme in this reaction, and the pyruvate is formed at the N-terminus of the alpha chain, which is derived from the carboxyl end of the proenzyme. The post-translation cleavage follows an unusual pathway, termed non-hydrolytic serinolysis, in which the side chain hydroxyl group of the serine supplies its oxygen atom to form the C-terminus of the beta chain, while the remainder of the serine residue undergoes an oxidative deamination to produce ammonia and the pyruvoyl group blocking the N-terminus of the alpha chain.

It carries out the reaction S-adenosyl-L-methionine + H(+) = S-adenosyl 3-(methylsulfanyl)propylamine + CO2. It participates in amine and polyamine biosynthesis; S-adenosylmethioninamine biosynthesis; S-adenosylmethioninamine from S-adenosyl-L-methionine: step 1/1. Catalyzes the decarboxylation of S-adenosylmethionine to S-adenosylmethioninamine (dcAdoMet), the propylamine donor required for the synthesis of the polyamines spermine and spermidine from the diamine putrescine. This Thermosipho africanus (strain TCF52B) protein is S-adenosylmethionine decarboxylase proenzyme.